The following is a 2443-amino-acid chain: Non-reducing polyketide synthase olcA (2443 aa).

The 438-residue stretch at 5–442 folds into the Ketosynthase family 3 (KS3) domain; that stretch reads IEPIAIVGTG…GANVHAILES (438 aa). Active-site for beta-ketoacyl synthase activity residues include Cys-178, His-317, and His-362. The malonyl-CoA:ACP transacylase (MAT) domain stretch occupies residues 550–885; sequence GVFTGQGAQW…AAIGSLWTYL (336 aa). The active-site For acyl/malonyl transferase activity is the Ser-645. Residues 940 to 1070 form an N-terminal hotdog fold region; that stretch reads NCLLGVLSPD…GVLTMTLGSA (131 aa). The region spanning 940–1231 is the PKS/mFAS DH domain; sequence NCLLGVLSPD…LVPLLEDLAD (292 aa). The tract at residues 989–1497 is product template (PT) domain; sequence ALESAKLIAG…SLPVTISNMR (509 aa). Residues 1085–1231 are C-terminal hotdog fold; sequence MRAVDIEDFY…LVPLLEDLAD (147 aa). Positions 1771–2159 are methyltransferase (CMeT) domain; it reads NKRYLAHTHV…LERFTCALPP (389 aa). The Carrier domain occupies 2359 to 2434; it reads EILTSHLLTQ…EITSSAAAKL (76 aa). Ser-2394 bears the O-(pantetheine 4'-phosphoryl)serine mark.

The catalysed reaction is nicotinyl-CoA + 2 malonyl-CoA + H(+) = 4-hydroxy-6-(pyridin-3-yl)-2H-pyran-2-one + 2 CO2 + 3 CoA. Its pathway is secondary metabolite biosynthesis; terpenoid biosynthesis. In terms of biological role, non-reducing polyketide synthase; part of the gene cluster that mediates the biosynthesis of 15-deoxyoxalicine B. The first step of the pathway is the synthesis of nicotinyl-CoA from nicotinic acid by the nicotinic acid-CoA ligase olcI. Nicotinyl-CoA is then a substrate of polyketide synthase olcA to produce 4-hydroxy-6-(3-pyridinyl)-2H-pyran-2-one (HPPO) which is further prenylated by the polyprenyl transferase olcH to yield geranylgeranyl-HPPO. Geranylgeranyl pyrophosphate is provided by the cluster-specific geranylgeranyl pyrophosphate synthase olcC. The FAD-dependent monooxygenase olcE catalyzes the epoxidation of geranylgeranyl-HPPO and the terpene cyclase olcD catalyzes the cyclization of the terpenoid component, resulting in the formation of the tricyclic terpene moiety seen in predecaturin E. The cytochrome P450 monooxygenase then catalyzes the allylic oxidation of predecaturin E, which is followed by spirocylization with concomitant loss of one molecule of water to form decaturin E. Decaturin E is the substrate of the cytochrome P450 monooxygenase olcJ which hydroxylates it at the C-29 position to form decaturin F. The short-chain dehydrogenase/reductase olcF may catalyze the oxidation of decaturin F to generate the 29-hydroxyl-27-one intermediate, and subsequent hemiacetal formation probably leads to the formation of decaturin C. The dioxygenase olcK may be a peroxisomal enzyme that catalyzes the hydroxylation of decaturin C into decaturin A once decaturin C is shuttled into the peroxisome by the MFS transporter olcL. Finally the cytochrome P450 monooxygenase olcB catalyzes the oxidative rearrangement to yield 15-deoxyoxalicine B. In the absence of olcJ, decaturin E may be shunted to a pathway in which it is oxidized to a ketone, possibly by olcF, to form decaturin D, which undergoes further allylic oxidation to yield decaturin G. Moreover, in the absence of oclK or oclL, oclB can convert decaturin C into 15-deoxyoxalicine A. The chain is Non-reducing polyketide synthase olcA from Penicillium canescens.